A 512-amino-acid polypeptide reads, in one-letter code: Retinaldehyde dehydrogenase 3 (512 aa).

Residues methionine 1–arginine 22 form a disordered region. Position 2 is an N-acetylalanine (alanine 2). NAD(+)-binding positions include lysine 204, glutamate 207, and glycine 257–glycine 262. Residue glutamate 280 is the Proton acceptor of the active site. Catalysis depends on cysteine 314, which acts as the Nucleophile. NAD(+) is bound by residues glutamine 361 and glutamate 411.

The protein belongs to the aldehyde dehydrogenase family. Homotetramer. As to expression, expressed at low levels in many tissues and at higher levels in salivary gland, stomach, and kidney.

The protein resides in the cytoplasm. It catalyses the reaction all-trans-retinal + NAD(+) + H2O = all-trans-retinoate + NADH + 2 H(+). The enzyme catalyses retinal + NAD(+) + H2O = retinoate + NADH + 2 H(+). The catalysed reaction is all-trans-13,14-dihydroretinal + NAD(+) + H2O = all-trans-13,14-dihydroretinoate + NADH + 2 H(+). Its pathway is cofactor metabolism; retinol metabolism. Its function is as follows. Catalyzes the NAD-dependent oxidation of aldehyde substrates, such as all-trans-retinal and all-trans-13,14-dihydroretinal, to their corresponding carboxylic acids, all-trans-retinoate and all-trans-13,14-dihydroretinoate, respectively. High specificity for all-trans-retinal as substrate, can also accept acetaldehyde as substrate in vitro but with lower affinity. Required for the biosynthesis of normal levels of retinoate in the embryonic ocular and nasal regions; a critical lipid in the embryonic development of the eye and the nasal region. The protein is Retinaldehyde dehydrogenase 3 (ALDH1A3) of Homo sapiens (Human).